The primary structure comprises 93 residues: Phosphoribosyl-ATP pyrophosphatase (93 aa).

Belongs to the PRA-PH family.

It localises to the cytoplasm. The catalysed reaction is 1-(5-phospho-beta-D-ribosyl)-ATP + H2O = 1-(5-phospho-beta-D-ribosyl)-5'-AMP + diphosphate + H(+). It participates in amino-acid biosynthesis; L-histidine biosynthesis; L-histidine from 5-phospho-alpha-D-ribose 1-diphosphate: step 2/9. This Mycolicibacterium smegmatis (strain ATCC 700084 / mc(2)155) (Mycobacterium smegmatis) protein is Phosphoribosyl-ATP pyrophosphatase.